A 682-amino-acid chain; its full sequence is MIDRYKHQQLQIGSVSPQQISAWANKILPNGEIVGEVTKPYTFHYKTNKPEKDGLFCERIFGPIKSGICACGNYRVIGAEKEDPKFCEQCGVEFIDSRIRRYQMGYIKLACPVTHVWYLKRLPSYIANLLDKPLKELEGLVYCDFSFARPIAKKPTFLRLRGLFEYEIQSWKYSIPLFFTTQGFDTFRNREISTGAGAIREQLADLDLRIVIDNSSVEWKDLGDEGSTGNEWEDRKIGRRKDFLVRRMELAKHFIRTNVEPERMVLCLLPVLPPELRPIIQIDGGKLMSSDINELYRRVIYRNNTLTDLLKTSRSTPGELVMCQEKLVQEAVDTLLDNGIRGQPMRDGHNKVYKSFSDVIEGKEGRFRETLLGKRVDYSGRSVIVVGPSLSLHRCGLPREIAIELFQTFVIRGLIRQHLASNIGIAKSKIREKEPIVWEILQEVMQGHPVLLNRAPTLHRLGIQAFQPVLVEGRAICLHPLVCKGFNADFDGDQMAVHVPLSLEAQAEARLLMFSHMNLLSPAIGDPISVPTQDMLIGLYVLTMGNRRGIFVNRYNPCNRRNYQNKTVDNNNYKHTKEKKPYFLSSYDALGAYQQKRINLHSPLWLRWRLDQRVIGSREVPIEVQYESLGTYQEIYGHYLIVRSVKKEILCIYIRTTVGHISFYREIEESVQGFCRAYSYGT.

Residues C69, C71, C87, and C90 each coordinate Zn(2+). Mg(2+)-binding residues include D489, D491, and D493.

Belongs to the RNA polymerase beta' chain family. RpoC1 subfamily. In plastids the minimal PEP RNA polymerase catalytic core is composed of four subunits: alpha, beta, beta', and beta''. When a (nuclear-encoded) sigma factor is associated with the core the holoenzyme is formed, which can initiate transcription. Requires Mg(2+) as cofactor. Zn(2+) serves as cofactor.

The protein resides in the plastid. The protein localises to the chloroplast. It carries out the reaction RNA(n) + a ribonucleoside 5'-triphosphate = RNA(n+1) + diphosphate. In terms of biological role, DNA-dependent RNA polymerase catalyzes the transcription of DNA into RNA using the four ribonucleoside triphosphates as substrates. This Acorus calamus var. americanus (American sweet flag) protein is DNA-directed RNA polymerase subunit beta'.